Reading from the N-terminus, the 172-residue chain is Adenine phosphoribosyltransferase (172 aa).

Belongs to the purine/pyrimidine phosphoribosyltransferase family. As to quaternary structure, homodimer.

It localises to the cytoplasm. The catalysed reaction is AMP + diphosphate = 5-phospho-alpha-D-ribose 1-diphosphate + adenine. It functions in the pathway purine metabolism; AMP biosynthesis via salvage pathway; AMP from adenine: step 1/1. In terms of biological role, catalyzes a salvage reaction resulting in the formation of AMP, that is energically less costly than de novo synthesis. The polypeptide is Adenine phosphoribosyltransferase (Synechocystis sp. (strain ATCC 27184 / PCC 6803 / Kazusa)).